The sequence spans 103 residues: uncharacterized protein (103 aa).

2 stretches are compositionally biased toward polar residues: residues 1 to 10 (MSNSCSTSSY) and 18 to 28 (TRSGSNVNRNY). Positions 1-28 (MSNSCSTSSYPIRRKTPTRSGSNVNRNY) are disordered.

This is an uncharacterized protein from Acanthamoeba polyphaga mimivirus (APMV).